The chain runs to 39 residues: Phospholipase A2 (39 aa).

Histidine 36 is an active-site residue.

The protein belongs to the phospholipase A2 family. Group III subfamily. Ca(2+) serves as cofactor. As to expression, expressed by the venom gland.

Its subcellular location is the secreted. The enzyme catalyses a 1,2-diacyl-sn-glycero-3-phosphocholine + H2O = a 1-acyl-sn-glycero-3-phosphocholine + a fatty acid + H(+). Its function is as follows. PLA2 catalyzes the calcium-dependent hydrolysis of the 2-acyl groups in 3-sn-phosphoglycerides. This chain is Phospholipase A2, found in Heloderma horridum horridum (Mexican beaded lizard).